The following is a 485-amino-acid chain: Aspartyl/glutamyl-tRNA(Asn/Gln) amidotransferase subunit B (485 aa).

It belongs to the GatB/GatE family. GatB subfamily. In terms of assembly, heterotrimer of A, B and C subunits.

The catalysed reaction is L-glutamyl-tRNA(Gln) + L-glutamine + ATP + H2O = L-glutaminyl-tRNA(Gln) + L-glutamate + ADP + phosphate + H(+). The enzyme catalyses L-aspartyl-tRNA(Asn) + L-glutamine + ATP + H2O = L-asparaginyl-tRNA(Asn) + L-glutamate + ADP + phosphate + 2 H(+). Allows the formation of correctly charged Asn-tRNA(Asn) or Gln-tRNA(Gln) through the transamidation of misacylated Asp-tRNA(Asn) or Glu-tRNA(Gln) in organisms which lack either or both of asparaginyl-tRNA or glutaminyl-tRNA synthetases. The reaction takes place in the presence of glutamine and ATP through an activated phospho-Asp-tRNA(Asn) or phospho-Glu-tRNA(Gln). In Borrelia turicatae (strain 91E135), this protein is Aspartyl/glutamyl-tRNA(Asn/Gln) amidotransferase subunit B.